The primary structure comprises 344 residues: Short chain dehydrogenase/reductase mfmJ (344 aa).

NADP(+) is bound by residues leucine 51, lysine 76, aspartate 99, asparagine 126, tyrosine 213, and lysine 217. The Proton donor role is filled by tyrosine 213. Lysine 217 serves as the catalytic Lowers pKa of active site Tyr.

This sequence belongs to the short-chain dehydrogenases/reductases (SDR) family.

Its function is as follows. Short chain dehydrogenase/reductase; part of the gene cluster that mediates the biosynthesis of the phthalide-terpenoid hybrid 11'-O-desmethylfendlerol. MfmJ seems not to be involved directly in the biosynthesis of 11'-O-desmethylfendlerol and its role has still to be determined. The biosynthesis of 11'-O-desmethylfendlerol begins with the NR-PKS mfmB that forms 3,5-dimethylorsellinic acid (DMOA), which is then transformed into the phthalide 5,7-dihydroxy-4-(hydroxymethyl)-6-methylphthalide by the cytochrome P450 monooxygenase mfmA and the hydrolase mfmC. Subsequently, the methyltransferase mfmE catalyzes 7-O-methylation to yield 5-hydroxy-4-(hydroxymethyl)-7-methoxy-6-methylphthalide, which undergoes C-3 hydroxylation by the cytochrome P450 monooxygenase mfmF. The resultant cyclopolic acid (2,5-dihydroxy-4-(hydroxymethyl)-7-methoxy-6-methylphthalide) is then farnesylated by the DMATS-type prenyltransferase mfmD to afford 5-O-farnesylcyclopolic acid. Finally, the Pyr4-family terpene cyclase mfmH cyclizes the farnesyl moiety of 5-O-farnesylcyclopolic acid into a drimane-like structure, thus completing the biosynthesis of 11'-O-desmethylfendlerol. This Annulohypoxylon moriforme (Filamentous fungus) protein is Short chain dehydrogenase/reductase mfmJ.